The primary structure comprises 163 residues: 16S rRNA aminocarboxypropyltransferase (163 aa).

Positions 18, 66, 87, and 106 each coordinate S-adenosyl-L-methionine.

Belongs to the TDD superfamily. TSR3 family.

Its subcellular location is the cytoplasm. It catalyses the reaction an N(1)-methylpseudouridine in rRNA + S-adenosyl-L-methionine = N(1)-methyl-N(3)-[(3S)-3-amino-3-carboxypropyl]pseudouridine in rRNA + S-methyl-5'-thioadenosine + H(+). Functionally, aminocarboxypropyltransferase that catalyzes the aminocarboxypropyl transfer on pseudouridine corresponding to position 914 in M.jannaschii 16S rRNA. It constitutes the last step in biosynthesis of the hypermodified N1-methyl-N3-(3-amino-3-carboxypropyl) pseudouridine (m1acp3-Psi). The protein is 16S rRNA aminocarboxypropyltransferase of Thermoplasma acidophilum (strain ATCC 25905 / DSM 1728 / JCM 9062 / NBRC 15155 / AMRC-C165).